The primary structure comprises 428 residues: Hydrolase acrC (428 aa).

Ser248 is an active-site residue.

This sequence belongs to the AB hydrolase superfamily. FUS2 hydrolase family.

Its pathway is secondary metabolite biosynthesis. Its function is as follows. Hydrolase; part of the cluster that mediates the biosynthesis of acurin A, a highly reduced polyketide coupled to a serine via a peptide bond. The activities of the highly reducing polyketide synthase acrA and the nonribosomal peptide synthetase acrB are collectively responsible for the synthesis of the acurin A core structure with a heptaketide backbone produced by acrA covalently fused to a L-serine by acrB. After the formation of the PK-NRP hybrid product, it is detached from acrB by reductive release to set up the formation of the lactam ring by aldol condensation. The hydrolyase acrC then catalyzes water loss to generate a double bond in the ring. This double bond is probably reduced, which is followed by three oxidations at C-22 to generate the carboxylic acid moiety, involving probably the FAD-binding monooxygenase acrE and the cytochrome P450 monooxygenases acrD and acrF. Finally, a last methylation step performed by the O-methyltransferase acrG leads to the production of acurin A. The polypeptide is Hydrolase acrC (Aspergillus aculeatus (strain ATCC 16872 / CBS 172.66 / WB 5094)).